The sequence spans 612 residues: FAD-linked oxidoreductase notD' (612 aa).

The signal sequence occupies residues methionine 1–glycine 19. N-linked (GlcNAc...) asparagine glycosylation is found at asparagine 50, asparagine 86, and asparagine 109. The region spanning glycine 124 to alanine 307 is the FAD-binding PCMH-type domain. Asparagine 311 and asparagine 396 each carry an N-linked (GlcNAc...) asparagine glycan.

It belongs to the oxygen-dependent FAD-linked oxidoreductase family. Requires FAD as cofactor.

The protein operates within alkaloid biosynthesis. In terms of biological role, FAD-linked oxidoreductase; part of the gene cluster that mediates the biosynthesis of notoamide, a fungal indole alkaloid that belongs to a family of natural products containing a characteristic bicyclo[2.2.2]diazaoctane core. The first step of notoamide biosynthesis involves coupling of L-proline and L-tryptophan by the bimodular NRPS notE', to produce cyclo-L-tryptophan-L-proline called brevianamide F. The reverse prenyltransferase notF' then acts as a deoxybrevianamide E synthase and converts brevianamide F to deoxybrevianamide E via reverse prenylation at C-2 of the indole ring leading to the bicyclo[2.2.2]diazaoctane core. Deoxybrevianamide E is further hydroxylated at C-6 of the indole ring, likely catalyzed by the cytochrome P450 monooxygenase notG', to yield 6-hydroxy-deoxybrevianamide E. 6-hydroxy-deoxybrevianamide E is a specific substrate of the prenyltransferase notC' for normal prenylation at C-7 to produce 6-hydroxy-7-prenyl-deoxybrevianamide, also called notoamide S. As the proposed pivotal branching point in notoamide biosynthesis, notoamide S can be diverted to notoamide E through an oxidative pyran ring closure putatively catalyzed by either notH' cytochrome P450 monooxygenase or the notD' FAD-linked oxidoreductase. This step would be followed by an indole 2,3-epoxidation-initiated pinacol-like rearrangement catalyzed by the notB' FAD-dependent monooxygenase leading to the formation of notoamide C and notoamide D. On the other hand notoamide S is converted to notoamide T by notH' (or notD'), a bifunctional oxidase that also functions as the intramolecular Diels-Alderase responsible for generation of (-)-notoamide T. To generate antipodal (+)-notoaminide T, notH (or notD) in Aspergillus strain MF297-2 is expected to catalyze a Diels-Alder reaction leading to the opposite stereochemistry. The remaining oxidoreductase notD' (or notH') likely catalyzes the oxidative pyran ring formation to yield (-)-stephacidin A. The FAD-dependent monooxygenase notI' is highly similar to notB' and is predicted to catalyze a similar conversion from (-)-stephacidin A to (+)-notoamide B via the 2,3-epoxidation of (-)-stephacidin A followed by a pinacol-type rearrangement. Finally, it remains unclear which enzyme could be responsible for the final hydroxylation steps leading to notoamide A and sclerotiamide. The sequence is that of FAD-linked oxidoreductase notD' from Aspergillus versicolor.